Reading from the N-terminus, the 82-residue chain is Small ribosomal subunit protein bS18 (82 aa).

This sequence belongs to the bacterial ribosomal protein bS18 family. Part of the 30S ribosomal subunit. Forms a tight heterodimer with protein bS6.

Functionally, binds as a heterodimer with protein bS6 to the central domain of the 16S rRNA, where it helps stabilize the platform of the 30S subunit. The sequence is that of Small ribosomal subunit protein bS18 from Methylobacterium nodulans (strain LMG 21967 / CNCM I-2342 / ORS 2060).